An 84-amino-acid chain; its full sequence is Small ribosomal subunit protein bS16 (84 aa).

Belongs to the bacterial ribosomal protein bS16 family.

The sequence is that of Small ribosomal subunit protein bS16 from Koribacter versatilis (strain Ellin345).